A 292-amino-acid polypeptide reads, in one-letter code: MFNRVVLFLLTNFAVLILAGIVMSVLGVNPAQMSGLLVMAAIFGFGGSFISLLLSKFMAKRSTGAQVITEPRTQTERWLVDTVRRQAQAAGIGMPEVAIYDGPEINAFATGANRNNALVAVSTGLLQHMREDEAEAVLGHEIAHIANGDMVTMALLQGVLNTFVIVLARVVGGIIDSALSGNRDSGRGFAYYIIVFVLEMVFGLFATMIAMWFSRRREFRADAGGAQLAGRNKMIAALERLSLNHGQNTLPSQVQAFGISGGVGEGLRRLFLSHPPLTERIAALRASNGTAM.

2 helical membrane passes run 5–25 (VVLF…VMSV) and 34–54 (SGLL…SLLL). Residue His140 participates in Zn(2+) binding. Glu141 is a catalytic residue. His144 provides a ligand contact to Zn(2+). 2 consecutive transmembrane segments (helical) span residues 155–175 (LLQG…GGII) and 193–213 (IIVF…AMWF). Residue Glu218 coordinates Zn(2+).

This sequence belongs to the peptidase M48B family. The cofactor is Zn(2+).

Its subcellular location is the cell inner membrane. In Xanthomonas campestris pv. campestris (strain B100), this protein is Protease HtpX.